The chain runs to 451 residues: Adenylyltransferase and sulfurtransferase MOCS3 (451 aa).

Residues 42–62 are disordered; the sequence is GEDSDEAEESSNDMPTPQTKL. Acidic residues predominate over residues 43-52; it reads EDSDEAEESS. Phosphothreonine is present on Thr-60. Residues Gly-99, Asp-120, 127–131, Lys-144, and 188–189 contribute to the ATP site; these read SNLHR and DN. Zn(2+)-binding residues include Cys-229 and Cys-232. Cys-246 functions as the Glycyl thioester intermediate; for adenylyltransferase activity in the catalytic mechanism. Zn(2+)-binding residues include Cys-304 and Cys-307. Residues 353–449 enclose the Rhodanese domain; the sequence is QSQPHLLLDV…WTGSVDATFP (97 aa). Cys-408 serves as the catalytic Cysteine persulfide intermediate; for sulfurtransferase activity.

This sequence in the N-terminal section; belongs to the HesA/MoeB/ThiF family. UBA4 subfamily. Zn(2+) serves as cofactor.

The protein resides in the cytoplasm. Its subcellular location is the cytosol. The catalysed reaction is [molybdopterin-synthase sulfur-carrier protein]-C-terminal Gly-Gly + ATP + H(+) = [molybdopterin-synthase sulfur-carrier protein]-C-terminal Gly-Gly-AMP + diphosphate. It carries out the reaction [molybdopterin-synthase sulfur-carrier protein]-C-terminal Gly-Gly-AMP + S-sulfanyl-L-cysteinyl-[cysteine desulfurase] + AH2 = [molybdopterin-synthase sulfur-carrier protein]-C-terminal-Gly-aminoethanethioate + L-cysteinyl-[cysteine desulfurase] + A + AMP + 2 H(+). It participates in tRNA modification; 5-methoxycarbonylmethyl-2-thiouridine-tRNA biosynthesis. It functions in the pathway cofactor biosynthesis; molybdopterin biosynthesis. In terms of biological role, plays a central role in 2-thiolation of mcm(5)S(2)U at tRNA wobble positions of cytosolic tRNA(Lys), tRNA(Glu) and tRNA(Gln). Also essential during biosynthesis of the molybdenum cofactor. Acts by mediating the C-terminal thiocarboxylation of sulfur carriers URM1 and MOCS2A. Its N-terminus first activates URM1 and MOCS2A as acyl-adenylates (-COAMP), then the persulfide sulfur on the catalytic cysteine is transferred to URM1 and MOCS2A to form thiocarboxylation (-COSH) of their C-terminus. The reaction probably involves hydrogen sulfide that is generated from the persulfide intermediate and that acts as a nucleophile towards URM1 and MOCS2A. Subsequently, a transient disulfide bond is formed. Does not use thiosulfate as sulfur donor; NFS1 probably acting as a sulfur donor for thiocarboxylation reactions. The sequence is that of Adenylyltransferase and sulfurtransferase MOCS3 from Drosophila persimilis (Fruit fly).